A 283-amino-acid polypeptide reads, in one-letter code: Short-chain dehydrogenase anuB (283 aa).

7 residues coordinate NADP(+): threonine 57, aspartate 78, asparagine 106, tyrosine 166, lysine 170, valine 199, and threonine 201. The Proton acceptor role is filled by tyrosine 166. The active-site Proton donor is the tyrosine 166. Lysine 170 serves as the catalytic Lowers pKa of active site Tyr.

The protein belongs to the short-chain dehydrogenases/reductases (SDR) family.

It functions in the pathway secondary metabolite biosynthesis. Its function is as follows. Highly reducing polyketide synthase; part of the gene cluster that mediates the biosynthesis of annullatin D, an alkylated aromatic polyketide with a fused dihydrobenzofuran lactone ring system that exhibits potent agonistic activities toward the cannabinoid receptors. The annullatin backbone 2-hydroxymethyl-3-pentylphenol is assembled from one acetyl-CoA starter unit and 5 malonyl-CoA elongation units by cooperation of the highly reducing polyketide synthase anuA, the short-chain dehydrogenase anuB and the oxidoreductase anuC, before being hydroxylated at the C-5 alkyl chain by the cytochrome P450 monooxygenase anuE to form (8S)-annullatin E. The prenyltransferase anuH subsequently installs one isoprenyl group at the benzene ring to form (8S)-annullatin J. Enzymatic or nonenzymatic dihydro-benzofuran ring formation between the prenyl and the phenolic hydroxyl groups in (8S)-annullatin J results in two diastereomers (2S,9S)-annullatin H and compound 12. The intermediate (2S,9S)-annullatin H is then converted to (2S,9S)-annullatin D by the FAD-linked oxidoreductase anuG-catalyzed five-member lactone ring formation. The isomer 12 acts as a substrate for the short-chain dehydrogenase anuF and is oxidized to (2R)-annullatin F, which is subsequently acetylated by an acetyltransferase leading to (2R)-annullatin G formation. The remaining enzymes identified within the cluster, anuD, anuI and anuJ, seem not to be involved in annullatin biosynthesis. The protein is Short-chain dehydrogenase anuB of Penicillium roqueforti (strain FM164).